The primary structure comprises 268 residues: Ribonuclease P protein subunit p30 (268 aa).

Alanine 2 bears the N-acetylalanine mark. Phosphoserine is present on serine 251.

This sequence belongs to the eukaryotic/archaeal RNase P protein component 3 family. Component of nuclear RNase P and RNase MRP ribonucleoproteins. RNase P consists of a catalytic RNA moiety and about 10 protein subunits; POP1, POP4, POP5, POP7, RPP14, RPP21, RPP25, RPP30, RPP38 and RPP40. Within the RNase P complex, POP1, POP7 and RPP25 form the 'finger' subcomplex, POP5, RPP14, RPP40 and homodimeric RPP30 form the 'palm' subcomplex, and RPP21, POP4 and RPP38 form the 'wrist' subcomplex. All subunits of the RNase P complex interact with the catalytic RNA. Several subunits of RNase P are also part of the RNase MRP complex. RNase MRP consists of a catalytic RNA moiety and about 8 protein subunits; POP1, POP7, RPP25, RPP30, RPP38, RPP40 and possibly also POP4 and POP5.

The protein resides in the nucleus. It is found in the nucleolus. Its function is as follows. Component of ribonuclease P, a ribonucleoprotein complex that generates mature tRNA molecules by cleaving their 5'-ends. Also a component of the MRP ribonuclease complex, which cleaves pre-rRNA sequences. The protein is Ribonuclease P protein subunit p30 (Rpp30) of Mus musculus (Mouse).